The sequence spans 450 residues: UPF0236 protein in vanSb 3'region (450 aa).

The protein belongs to the UPF0236 family.

This is UPF0236 protein in vanSb 3'region from Streptococcus gallolyticus (Streptococcus bovis biotype I).